A 448-amino-acid chain; its full sequence is UDP-N-acetylmuramoylalanine--D-glutamate ligase (448 aa).

116–122 (GSNAKST) provides a ligand contact to ATP.

It belongs to the MurCDEF family.

The protein resides in the cytoplasm. The catalysed reaction is UDP-N-acetyl-alpha-D-muramoyl-L-alanine + D-glutamate + ATP = UDP-N-acetyl-alpha-D-muramoyl-L-alanyl-D-glutamate + ADP + phosphate + H(+). It functions in the pathway cell wall biogenesis; peptidoglycan biosynthesis. Cell wall formation. Catalyzes the addition of glutamate to the nucleotide precursor UDP-N-acetylmuramoyl-L-alanine (UMA). This Pseudomonas syringae pv. syringae (strain B728a) protein is UDP-N-acetylmuramoylalanine--D-glutamate ligase.